A 121-amino-acid chain; its full sequence is Centrocin 2 (121 aa).

An N-terminal signal peptide occupies residues 1-20 (MMIKIAVVLCAVMATSMVFA). The propeptide occupies 21–50 (NDVKEQELADLLDLLISEEVSSPDDAVAES). Tryptophan 51 and tryptophan 59 each carry 6'-bromotryptophan. Cysteine 77 and cysteine 112 are oxidised to a cystine. Residues 83-106 (SPQEARAKVLEAFPEMKESDLDEE) constitute a propeptide that is removed on maturation. A Pyrrolidone carboxylic acid modification is found at glutamine 107. Histidine 119 bears the Histidine amide mark.

As to quaternary structure, heterodimer of a light and a heavy chain, probably disulfide-linked.

Functionally, has antimicrobial activity against Gram-negative bacteria, Gram-positive bacteria and against fungi with minimum inhibitory concentration (MIC) between 0.78 uM and 50 uM. Shows little hemolytic activity at concentrations up to 12.5 uM but &gt;50% lysis at 100 uM. The chain is Centrocin 2 from Echinus esculentus (Sea urchin).